Here is a 447-residue protein sequence, read N- to C-terminus: MSTMTPAEIVSELDKHIIGQAKAKKAVAVALRNRWRRQQVAEPLRQEITPKNILMIGPTGVGKTEIARRLAKLADAPFIKIEATKFTEVGYVGRDVDSIVRDLIEISVKQTRETEMRKVRSKATDLAEDRILDVLLPQPRAVGFGASAEHANDDNNATRQTFRKRLREGQLDDKEIELDIEQPAVGMDIMAPPGMEEMTEQIRSMFSNLGSGKKQRRKVKIKEALKLLTDEEAAKMLNDEEVKTKAVQNVEQNGIVFLDEIDKITSRNHEGGGGEVSRQGVQRDLLPLVEGTTINTKYGMVKTDHILFIASGAFHLAKPSDLIPELQGRFPIRVELDSLSVKDFEAILVATDASLVKQYQALLATEDVKLEFADDGIRRLAEIAYAVNEKTENIGARRLYTVIEKLLEEVSFAAGNHAGQSVTIDSAYVDHALGEVSKDEDLSRYVL.

Residues Ile-18, Gly-60 to Glu-65, Asp-259, Glu-325, and Arg-397 contribute to the ATP site.

Belongs to the ClpX chaperone family. HslU subfamily. As to quaternary structure, a double ring-shaped homohexamer of HslV is capped on each side by a ring-shaped HslU homohexamer. The assembly of the HslU/HslV complex is dependent on binding of ATP.

The protein localises to the cytoplasm. Functionally, ATPase subunit of a proteasome-like degradation complex; this subunit has chaperone activity. The binding of ATP and its subsequent hydrolysis by HslU are essential for unfolding of protein substrates subsequently hydrolyzed by HslV. HslU recognizes the N-terminal part of its protein substrates and unfolds these before they are guided to HslV for hydrolysis. The polypeptide is ATP-dependent protease ATPase subunit HslU (Burkholderia pseudomallei (strain K96243)).